The following is a 469-amino-acid chain: SWI/SNF complex subunit SWI3B (469 aa).

A disordered region spans residues 1 to 42 (MAMKAPDPGGSGEILPSTPSLSETTSGGAAAASKSAQLPSSS). Positions 15–42 (LPSTPSLSETTSGGAAAASKSAQLPSSS) are enriched in low complexity. Residues 48-145 (IHVPSYSSWF…YNSSASAKPL (98 aa)) enclose the SWIRM domain. In terms of domain architecture, SANT spans 223–274 (ESKPEWSDKEILLLLEAVMHYGDDWKKVASHVIGRTEKDCVSQFVKLPFGEQ). Basic and acidic residues-rich tracts occupy residues 293 to 306 (DSDIPESEGIDKDG) and 360 to 369 (DKNASRDPNR). Disordered stretches follow at residues 293-314 (DSDIPESEGIDKDGSSPNKRIK) and 360-387 (DKNASRDPNRQDANAASSGETTRNESER). Over residues 370–380 (QDANAASSGET) the composition is skewed to polar residues. Residues 423–447 (VHFEKLDLEMERSRKQLEEVRNLLF) are a coiled coil.

As to quaternary structure, homodimers and heterodimers. Interacts with SWI3A, SWI3C, SWI3D, BSH, BRM and FCA (via C-terminus), and (via N-terminus) with HAB1. Interacts with MORC6 and SUVH9. Expressed in roots, stems, leaves, flowers and siliques.

The protein localises to the nucleus. In terms of biological role, component of a multiprotein complex equivalent of the SWI/SNF complex, an ATP-dependent chromatin-remodeling complex, which is required for the positive and negative regulation of gene expression of a large number of genes. It changes chromatin structure by altering DNA-histone contacts within a nucleosome, leading eventually to a change in nucleosome position, thus facilitating or repressing binding of gene-specific transcription factors. May play an essential role in the transition from the vegetative to the reproductive phase of development. May be a positive regulator of ABA signaling. The polypeptide is SWI/SNF complex subunit SWI3B (SWI3B) (Arabidopsis thaliana (Mouse-ear cress)).